We begin with the raw amino-acid sequence, 475 residues long: Glutamate--tRNA ligase (475 aa).

The 'HIGH' region signature appears at 8 to 18; the sequence is PSPTGTLHIGT. Positions 247 to 251 match the 'KMSKS' region motif; sequence KLSKR. Lys-250 is a binding site for ATP.

Belongs to the class-I aminoacyl-tRNA synthetase family. Glutamate--tRNA ligase type 1 subfamily. In terms of assembly, monomer.

It is found in the cytoplasm. It catalyses the reaction tRNA(Glu) + L-glutamate + ATP = L-glutamyl-tRNA(Glu) + AMP + diphosphate. Its function is as follows. Catalyzes the attachment of glutamate to tRNA(Glu) in a two-step reaction: glutamate is first activated by ATP to form Glu-AMP and then transferred to the acceptor end of tRNA(Glu). This is Glutamate--tRNA ligase from Synechococcus sp. (strain RCC307).